The chain runs to 418 residues: Putative ion-transport protein YfeO (418 aa).

Transmembrane regions (helical) follow at residues 10-30, 54-74, 99-119, 120-140, 149-169, 186-206, 223-243, 258-278, 300-320, 322-342, 343-363, and 371-391; these read LLLS…LIVV, DSPL…GLVI, ALPG…SLGP, EHPI…RLLP, ILAS…AALI, LFAP…FFHP, ILSG…AVWC, VLVL…GGPV, DYFL…ASGF, GGRI…LHEH, VPAV…VLVV, and LFMA…CIVM.

Belongs to the chloride channel (TC 2.A.49) family.

It localises to the cell membrane. The protein is Putative ion-transport protein YfeO of Escherichia coli O9:H4 (strain HS).